Consider the following 404-residue polypeptide: Starvation-sensing protein RspA (404 aa).

This sequence belongs to the mandelate racemase/muconate lactonizing enzyme family.

Probably involved in the degradation of homoserine lactone (HSL) or of a metabolite of HSL that signals starvation. The protein is Starvation-sensing protein RspA of Escherichia coli (strain K12).